Consider the following 690-residue polypeptide: Peroxidase (690 aa).

Positions 1-20 are cleaved as a signal peptide; it reads MIRARDLLLLALLGFISSAL. The cysteines at positions 100 and 112 are disulfide-linked. H185 (proton acceptor) is an active-site residue. N310 carries N-linked (GlcNAc...) asparagine glycosylation. C315 and C324 are oxidised to a cystine. H437 contacts heme b. Disulfide bonds link C536–C592 and C636–C662.

The protein belongs to the peroxidase family. XPO subfamily. Heme b is required as a cofactor.

The protein resides in the secreted. The catalysed reaction is 2 a phenolic donor + H2O2 = 2 a phenolic radical donor + 2 H2O. In terms of biological role, involved in the chorion hardening process, through protein cross-linking mediated by the formation of di- and tri-tyrosine bonds. The sequence is that of Peroxidase (Pxd) from Drosophila melanogaster (Fruit fly).